Consider the following 320-residue polypeptide: Methenyltetrahydromethanopterin cyclohydrolase (320 aa).

Belongs to the MCH family.

It localises to the cytoplasm. The enzyme catalyses 5,10-methenyl-5,6,7,8-tetrahydromethanopterin + H2O = N(5)-formyl-5,6,7,8-tetrahydromethanopterin + H(+). Catalyzes the hydrolysis of methenyl-H(4)MPT(+) to 5-formyl-H(4)MPT. This Methanococcoides burtonii (strain DSM 6242 / NBRC 107633 / OCM 468 / ACE-M) protein is Methenyltetrahydromethanopterin cyclohydrolase.